Reading from the N-terminus, the 429-residue chain is Glucose-1-phosphate adenylyltransferase (429 aa).

Alpha-D-glucose 1-phosphate is bound by residues glycine 162, 177-178 (EK), and serine 209.

The protein belongs to the bacterial/plant glucose-1-phosphate adenylyltransferase family. In terms of assembly, homotetramer.

It carries out the reaction alpha-D-glucose 1-phosphate + ATP + H(+) = ADP-alpha-D-glucose + diphosphate. It participates in glycan biosynthesis; glycogen biosynthesis. In terms of biological role, involved in the biosynthesis of ADP-glucose, a building block required for the elongation reactions to produce glycogen. Catalyzes the reaction between ATP and alpha-D-glucose 1-phosphate (G1P) to produce pyrophosphate and ADP-Glc. In Gloeothece citriformis (strain PCC 7424) (Cyanothece sp. (strain PCC 7424)), this protein is Glucose-1-phosphate adenylyltransferase.